We begin with the raw amino-acid sequence, 423 residues long: Probable sodium/metabolite cotransporter BASS4, chloroplastic (423 aa).

The transit peptide at 1-55 (MVTTHHLCLLRSTVLSVPVRLRAPRAPPHPRLPTASASASSYHGPTHLRRLRPLR) directs the protein to the chloroplast. Residues 23-45 (APRAPPHPRLPTASASASSYHGP) are disordered. Helical transmembrane passes span 96–116 (FLPLALIAGIALALMDPTLGC), 123–140 (LSKYSTFGIFLISGLTLR), 153–173 (AGLFGLASILLFTPFLAQFIM), 182–202 (FITGLAMFCCMPTTLSSGVTL), 212–232 (LALAMTAISNLLGIMIVPLSL), 244–264 (LPTEKLFKSLVTTLLIPIILG), 284–301 (GFSVTSAILLSLVPWIQV), 315–335 (AFAVAVTVGVLLHFALLAFNA), and 389–409 (LLVIPCVAAHINQIIIDSIIV).

The protein belongs to the bile acid:sodium symporter (BASS) (TC 2.A.28) family.

Its subcellular location is the membrane. It localises to the plastid. It is found in the chloroplast envelope. In terms of biological role, may function as sodium-coupled metabolite transporter across the chloroplast envelope. The chain is Probable sodium/metabolite cotransporter BASS4, chloroplastic (BASS4) from Oryza sativa subsp. indica (Rice).